Here is a 519-residue protein sequence, read N- to C-terminus: 3-octaprenyl-4-hydroxybenzoate carboxy-lyase (519 aa).

N177 is a Mn(2+) binding site. Prenylated FMN-binding positions include 180–182 (IYR), 194–196 (RWL), and 199–200 (RG). E243 is a binding site for Mn(2+). D318 functions as the Proton donor in the catalytic mechanism.

Belongs to the UbiD family. As to quaternary structure, homohexamer. It depends on prenylated FMN as a cofactor. The cofactor is Mn(2+).

Its subcellular location is the cell membrane. It carries out the reaction a 4-hydroxy-3-(all-trans-polyprenyl)benzoate + H(+) = a 2-(all-trans-polyprenyl)phenol + CO2. The protein operates within cofactor biosynthesis; ubiquinone biosynthesis. In terms of biological role, catalyzes the decarboxylation of 3-octaprenyl-4-hydroxy benzoate to 2-octaprenylphenol, an intermediate step in ubiquinone biosynthesis. The chain is 3-octaprenyl-4-hydroxybenzoate carboxy-lyase from Burkholderia pseudomallei (strain 1710b).